The following is a 166-amino-acid chain: NAD(P)H-quinone oxidoreductase subunit I, chloroplastic (166 aa).

4Fe-4S ferredoxin-type domains lie at 55–84 (GRIH…VDWK) and 95–124 (LNYS…MTEE). [4Fe-4S] cluster contacts are provided by C64, C67, C70, C74, C104, C107, C110, and C114.

Belongs to the complex I 23 kDa subunit family. NDH is composed of at least 16 different subunits, 5 of which are encoded in the nucleus. The cofactor is [4Fe-4S] cluster.

Its subcellular location is the plastid. It localises to the chloroplast thylakoid membrane. It carries out the reaction a plastoquinone + NADH + (n+1) H(+)(in) = a plastoquinol + NAD(+) + n H(+)(out). The enzyme catalyses a plastoquinone + NADPH + (n+1) H(+)(in) = a plastoquinol + NADP(+) + n H(+)(out). In terms of biological role, NDH shuttles electrons from NAD(P)H:plastoquinone, via FMN and iron-sulfur (Fe-S) centers, to quinones in the photosynthetic chain and possibly in a chloroplast respiratory chain. The immediate electron acceptor for the enzyme in this species is believed to be plastoquinone. Couples the redox reaction to proton translocation, and thus conserves the redox energy in a proton gradient. This chain is NAD(P)H-quinone oxidoreductase subunit I, chloroplastic, found in Stevia rebaudiana (Stevia).